The sequence spans 492 residues: Dipeptide and tripeptide permease A (492 aa).

Over 1 to 20 (MSTANKHPEAASLNAFKQPR) the chain is Cytoplasmic. The chain crosses the membrane as a helical span at residues 21-43 (SFYLIFSIELWERFGYYGLQGIM). Topologically, residues 44–58 (AVYLVKMLGMSEAQS) are periplasmic. The helical transmembrane segment at 59 to 79 (ITLFASFSALVYGLIAVGGWL) threads the bilayer. Over 80-88 (GDKVLGTKR) the chain is Cytoplasmic. Residues 89–109 (VIVLGTLVLALGYALVAWSGH) traverse the membrane as a helical segment. Position 110 (D110) is a topological domain, periplasmic. Residues 111–131 (IAMIYFGMATIAVGNGLFKAN) form a helical membrane-spanning segment. At 132-152 (PSSLLSTCYEKDDPRLDGAFT) the chain is on the cytoplasmic side. Residues 153 to 173 (MYYMAINIGSFFSMLATPWLA) form a helical membrane-spanning segment. Topologically, residues 174–178 (AQFGW) are periplasmic. A helical transmembrane segment spans residues 179–199 (STAFGLSFVGMLITLVNFMFF). Topologically, residues 200 to 217 (RKWVKDHGSKPDFAPLNM) are cytoplasmic. The chain crosses the membrane as a helical span at residues 218–238 (GKLLVTLLGIAVMIAAATWLL). Residues 239–245 (HNQDIAR) are Periplasmic-facing. Residues 246 to 266 (MVLGAVAVAIVVIFTKEALTL) traverse the membrane as a helical segment. Over 267 to 273 (KGAARRK) the chain is Cytoplasmic. A helical transmembrane segment spans residues 274–294 (MIVAFLLMLEAIVFFVLYMQM). Topologically, residues 295-319 (PTSLNFFAIRNVEHSLLGIAFQPEQ) are periplasmic. Residues 320-340 (FQALNPFWIMIFSPLLAALYN) form a helical membrane-spanning segment. Topologically, residues 341–351 (KLGDRMPMPHK) are cytoplasmic. The helical transmembrane segment at 352 to 372 (FALGMVLCSAAFLVLPLGASL) threads the bilayer. The Periplasmic portion of the chain corresponds to 373 to 377 (ANKMG). A helical transmembrane segment spans residues 378–398 (IVSVGWLVLSYALQSVGELMI). Topologically, residues 399–413 (SGLGLAMVAQLVPQR) are cytoplasmic. The helical transmembrane segment at 414-434 (LMGFIMGSWFLTTAGAAMVAG) threads the bilayer. Over 435–458 (KVANLMAVPENITNPLLSLHVYGD) the chain is Periplasmic. The chain crosses the membrane as a helical span at residues 459–479 (IFFKIGITTGVIAVLMILAAP). The Cytoplasmic segment spans residues 480 to 492 (LLNRMTQDEQPGV).

The protein belongs to the major facilitator superfamily. Proton-dependent oligopeptide transporter (POT/PTR) (TC 2.A.17) family. DtpA subfamily.

The protein resides in the cell inner membrane. Functionally, proton-dependent permease that transports di- and tripeptides. This chain is Dipeptide and tripeptide permease A, found in Erwinia pyrifoliae (strain DSM 12163 / CIP 106111 / Ep16/96).